Reading from the N-terminus, the 569-residue chain is ABC1 family protein MCP2 (569 aa).

The N-terminal 18 residues, 1–18 (MMTKAFFNKLPFEVFRRY), are a transit peptide targeting the mitochondrion. At 19–34 (VRTGKSIPQRSPRTRK) the chain is on the mitochondrial matrix side. A helical transmembrane segment spans residues 35–51 (SLLVGGTIASAVVLYNF). Over 52-569 (NDTFHDSVKH…KFIPKTWLSS (518 aa)) the chain is Mitochondrial intermembrane.

The protein belongs to the protein kinase superfamily. ADCK protein kinase family.

It is found in the mitochondrion. Its subcellular location is the mitochondrion inner membrane. In terms of biological role, component of MIOREX complexes, large expressome-like assemblies of ribosomes with factors involved in all the steps of post-transcriptional gene expression. Involved in mitochondrial lipid homeostasis. This is ABC1 family protein MCP2 from Saccharomyces cerevisiae (strain ATCC 204508 / S288c) (Baker's yeast).